A 115-amino-acid polypeptide reads, in one-letter code: NADH-ubiquinone oxidoreductase chain 3 (115 aa).

The next 3 membrane-spanning stretches (helical) occupy residues 4-24 (LTALSVNIALSTCLIAIAFWL), 55-75 (FFLVAITFLLFDLEIALLLPL), and 87-107 (MMLTAFILVSVLALGLAYEWM).

This sequence belongs to the complex I subunit 3 family. As to quaternary structure, core subunit of respiratory chain NADH dehydrogenase (Complex I) which is composed of 45 different subunits. Interacts with TMEM186. Interacts with TMEM242.

It is found in the mitochondrion inner membrane. It carries out the reaction a ubiquinone + NADH + 5 H(+)(in) = a ubiquinol + NAD(+) + 4 H(+)(out). Core subunit of the mitochondrial membrane respiratory chain NADH dehydrogenase (Complex I) which catalyzes electron transfer from NADH through the respiratory chain, using ubiquinone as an electron acceptor. Essential for the catalytic activity of complex I. The chain is NADH-ubiquinone oxidoreductase chain 3 from Peromyscus boylii (Brush deermouse).